We begin with the raw amino-acid sequence, 201 residues long: MENLNSYIKGHFADSILVKEQILKDENLITLIKNASLEVIKAYKNGNKTLLAGNGGSAADAQHIAGEFVSRFYFDRPGIASIALTTDTSILTAIGNDYGYENLFARQVQAQGVKGDVFIGISTSGNSKNILKALEFCKQKEIISIGLSGASGGAMNELCDYCIKVPSTCTPRIQEAHILIGHIICAIVEEELFGKGFSCKQ.

The SIS domain occupies 39–198; sequence VIKAYKNGNK…EEELFGKGFS (160 aa). 54–56 is a substrate binding site; it reads NGG. 2 residues coordinate Zn(2+): H63 and E67. Residues E67, 96–97, 122–124, S127, and Q174 each bind substrate; these read ND and STS. Residues Q174 and H182 each coordinate Zn(2+).

It belongs to the SIS family. GmhA subfamily. Homotetramer. The cofactor is Zn(2+).

The protein resides in the cytoplasm. It carries out the reaction 2 D-sedoheptulose 7-phosphate = D-glycero-alpha-D-manno-heptose 7-phosphate + D-glycero-beta-D-manno-heptose 7-phosphate. Its pathway is carbohydrate biosynthesis; D-glycero-D-manno-heptose 7-phosphate biosynthesis; D-glycero-alpha-D-manno-heptose 7-phosphate and D-glycero-beta-D-manno-heptose 7-phosphate from sedoheptulose 7-phosphate: step 1/1. It participates in capsule biogenesis; capsule polysaccharide biosynthesis. Catalyzes the isomerization of sedoheptulose 7-phosphate in D-glycero-D-manno-heptose 7-phosphate. No activity with L-galacto-heptulose, L-galacto-heptulose 7-phosphate or D-manno-heptulose. The protein is Phosphoheptose isomerase 2 of Campylobacter jejuni subsp. jejuni serotype O:2 (strain ATCC 700819 / NCTC 11168).